The sequence spans 1289 residues: Pesticidal crystal protein Cry5Ab (1289 aa).

The tract at residues 1263 to 1289 (PLPTDDQNSEGNTASSTNSDTSMNNNQ) is disordered. A compositionally biased stretch (low complexity) spans 1274-1289 (NTASSTNSDTSMNNNQ).

It belongs to the delta endotoxin family.

Endotoxin with nematicidal activity. The protein is Pesticidal crystal protein Cry5Ab (cry5Ab) of Bacillus thuringiensis subsp. darmstadiensis.